The primary structure comprises 306 residues: Tyrosine recombinase XerD (306 aa).

One can recognise a Core-binding (CB) domain in the interval 1–83 (MGFIAQFLEM…TIKSYYEFLI (83 aa)). A Tyr recombinase domain is found at 104–299 (KLPEILSIAQ…QTNHLKKALL (196 aa)). Residues Arg-145, Lys-176, His-251, Arg-254, and His-277 contribute to the active site. The active-site O-(3'-phospho-DNA)-tyrosine intermediate is the Tyr-286.

This sequence belongs to the 'phage' integrase family. XerD subfamily. In terms of assembly, forms a cyclic heterotetrameric complex composed of two molecules of XerC and two molecules of XerD.

It localises to the cytoplasm. Functionally, site-specific tyrosine recombinase, which acts by catalyzing the cutting and rejoining of the recombining DNA molecules. The XerC-XerD complex is essential to convert dimers of the bacterial chromosome into monomers to permit their segregation at cell division. It also contributes to the segregational stability of plasmids. The protein is Tyrosine recombinase XerD of Rickettsia conorii (strain ATCC VR-613 / Malish 7).